The chain runs to 320 residues: Mitochondrial thiamine pyrophosphate carrier (320 aa).

Solcar repeat units lie at residues 13 to 106 (NTKF…LTEL), 116 to 202 (REFS…LKHL), and 214 to 309 (NENL…FCNV). A helical membrane pass occupies residues 19–39 (AVAGSVSGLVTRALISPFDVI). At Ser51 the chain carries Phosphoserine. 4 helical membrane passes run 87-107 (ILSI…TELV), 122-142 (FVCG…VDVL), 173-193 (VFYK…GLQF), and 220-240 (LLCG…LDLF). The short motif at 241 to 246 (KKRLQV) is the Substrate recognition element. The chain crosses the membrane as a helical span at residues 293–313 (ALSTGFMFFWYEFFCNVFHCM).

This sequence belongs to the mitochondrial carrier (TC 2.A.29) family.

It is found in the mitochondrion membrane. The enzyme catalyses thiamine phosphate(out) + thiamine diphosphate(in) = thiamine phosphate(in) + thiamine diphosphate(out). In terms of biological role, mitochondrial transporter mediating uptake of thiamine diphosphate into mitochondria. It is not clear if the antiporter activity is affected by the membrane potential or by the proton electrochemical gradient. The chain is Mitochondrial thiamine pyrophosphate carrier (SLC25A19) from Pongo abelii (Sumatran orangutan).